Here is a 277-residue protein sequence, read N- to C-terminus: Zaragozic acid A biosynthesis cluster protein 1 (277 aa).

It functions in the pathway secondary metabolite biosynthesis. Its function is as follows. Part of the gene cluster that mediates the biosynthesis of squalestatin S1 (SQS1, also known as zaragozic acid A), a heavily oxidized fungal polyketide that offers potent cholesterol lowering activity by targeting squalene synthase (SS). SQS1 is composed of a 2,8-dioxobicyclic[3.2.1]octane-3,4,5-tricarboxyclic acid core that is connected to two lipophilic polyketide arms. These initial steps feature the priming of an unusual benzoic acid starter unit onto the highly reducing polyketide synthase clz14, followed by oxaloacetate extension and product release to generate a tricarboxylic acid containing product. The phenylalanine ammonia lyase (PAL) clz10 and the acyl-CoA ligase clz12 are involved in transforming phenylalanine into benzoyl-CoA. The citrate synthase-like protein clz17 is involved in connecting the C-alpha-carbons of the hexaketide chain and oxaloacetate to afford the tricarboxylic acid unit. The potential hydrolytic enzymes, clz11 and clz13, are in close proximity to pks2 and may participate in product release. On the other side, the tetraketide arm is synthesized by a the squalestatin tetraketide synthase clz2 and enzymatically esterified to the core in the last biosynthetic step, by the acetyltransferase clz6. The biosynthesis of the tetraketide must involve 3 rounds of chain extension. After the first and second rounds methyl-transfer occurs, and in all rounds of extension the ketoreductase and dehydratase are active. The enoyl reductase and C-MeT of clz2 are not active in the final round of extension. The acetyltransferase clz6 appears to have a broad substrate selectivity for its acyl CoA substrate, allowing the in vitro synthesis of novel squalestatins. The biosynthesis of SQS1 requires several oxidative steps likely performed by oxidoreductases clz3, clz15 and clz16. Finally, in support of the identification of the cluster as being responsible for SQS1 production, the cluster contains a gene encoding a putative squalene synthase (SS) clz20, suggesting a likely mechanism for self-resistance. The polypeptide is Zaragozic acid A biosynthesis cluster protein 1 (Cochliobolus lunatus (Filamentous fungus)).